The chain runs to 348 residues: tRNA pseudouridine synthase D (348 aa).

Phe-27 contributes to the substrate binding site. The Nucleophile role is filled by Asp-80. A substrate-binding site is contributed by Asn-129. In terms of domain architecture, TRUD spans 155–303 (GVPNYFGSQR…VEPARRAVLL (149 aa)). Phe-329 is a substrate binding site.

It belongs to the pseudouridine synthase TruD family.

The enzyme catalyses uridine(13) in tRNA = pseudouridine(13) in tRNA. In terms of biological role, responsible for synthesis of pseudouridine from uracil-13 in transfer RNAs. The chain is tRNA pseudouridine synthase D from Pectobacterium atrosepticum (strain SCRI 1043 / ATCC BAA-672) (Erwinia carotovora subsp. atroseptica).